The primary structure comprises 313 residues: Putative S-adenosyl-L-methionine-dependent methyltransferase MAV_4573 (313 aa).

Residues Asp-129 and 158–159 (DL) each bind S-adenosyl-L-methionine.

It belongs to the UPF0677 family.

Its function is as follows. Exhibits S-adenosyl-L-methionine-dependent methyltransferase activity. This chain is Putative S-adenosyl-L-methionine-dependent methyltransferase MAV_4573, found in Mycobacterium avium (strain 104).